Reading from the N-terminus, the 445-residue chain is UPF0210 protein Ccon26_06850 (445 aa).

This sequence belongs to the UPF0210 family. In terms of assembly, homodimer.

This Campylobacter concisus (strain 13826) protein is UPF0210 protein Ccon26_06850.